The sequence spans 157 residues: Endoribonuclease YbeY (157 aa).

Positions 123, 127, and 133 each coordinate Zn(2+).

Belongs to the endoribonuclease YbeY family. Zn(2+) is required as a cofactor.

Its subcellular location is the cytoplasm. In terms of biological role, single strand-specific metallo-endoribonuclease involved in late-stage 70S ribosome quality control and in maturation of the 3' terminus of the 16S rRNA. This chain is Endoribonuclease YbeY, found in Limosilactobacillus fermentum (strain NBRC 3956 / LMG 18251) (Lactobacillus fermentum).